The following is a 602-amino-acid chain: Elongation factor 4 (602 aa).

In terms of domain architecture, tr-type G spans 7–189; the sequence is DKIRNFSIVA…AIVTRLPPPK (183 aa). GTP-binding positions include 19-24 and 136-139; these read DHGKST and NKVD.

Belongs to the TRAFAC class translation factor GTPase superfamily. Classic translation factor GTPase family. LepA subfamily.

The protein resides in the cell inner membrane. It carries out the reaction GTP + H2O = GDP + phosphate + H(+). Its function is as follows. Required for accurate and efficient protein synthesis under certain stress conditions. May act as a fidelity factor of the translation reaction, by catalyzing a one-codon backward translocation of tRNAs on improperly translocated ribosomes. Back-translocation proceeds from a post-translocation (POST) complex to a pre-translocation (PRE) complex, thus giving elongation factor G a second chance to translocate the tRNAs correctly. Binds to ribosomes in a GTP-dependent manner. In Caulobacter vibrioides (strain NA1000 / CB15N) (Caulobacter crescentus), this protein is Elongation factor 4.